The primary structure comprises 472 residues: Ribosomal protein uS12 methylthiotransferase RimO (472 aa).

Residues 33–143 (NRIGFVSLGC…VLKHVHKYVP (111 aa)) form the MTTase N-terminal domain. 6 residues coordinate [4Fe-4S] cluster: Cys-42, Cys-78, Cys-107, Cys-175, Cys-179, and Cys-182. A Radical SAM core domain is found at 161–398 (LTPKHYAYLK…MELQAEISAE (238 aa)). A TRAM domain is found at 401–467 (ARFVGRTLDI…EHDLWAEVVD (67 aa)).

This sequence belongs to the methylthiotransferase family. RimO subfamily. [4Fe-4S] cluster serves as cofactor.

Its subcellular location is the cytoplasm. The catalysed reaction is L-aspartate(89)-[ribosomal protein uS12]-hydrogen + (sulfur carrier)-SH + AH2 + 2 S-adenosyl-L-methionine = 3-methylsulfanyl-L-aspartate(89)-[ribosomal protein uS12]-hydrogen + (sulfur carrier)-H + 5'-deoxyadenosine + L-methionine + A + S-adenosyl-L-homocysteine + 2 H(+). In terms of biological role, catalyzes the methylthiolation of an aspartic acid residue of ribosomal protein uS12. The sequence is that of Ribosomal protein uS12 methylthiotransferase RimO from Shewanella putrefaciens (strain CN-32 / ATCC BAA-453).